Reading from the N-terminus, the 624-residue chain is Leucine-rich repeat, immunoglobulin-like domain and transmembrane domain-containing protein 1 (624 aa).

The signal sequence occupies residues 1–21 (MWVALGMLWLLALGGPHQAWG). The 38-residue stretch at 22–59 (FCPSECSCSLRILSDGSKARTVVCSDPDLTLPPASIPP) folds into the LRRNT domain. Residues 22–527 (FCPSECSCSL…EVVDAEGTQR (506 aa)) lie on the Lumenal side of the membrane. LRR repeat units lie at residues 60–81 (DTCKLRLERTAIRRVPGETFRP), 84–105 (RLEQLWLPYNALSELSALMLRG), 108–129 (RLRELRLPGNRLVTFPWAALRD), 132–153 (QLQLLDLQANRLSTLPPEAAHF), and 156–177 (NLTFLDLSNNQLMRLPEELLDV). A glycan (N-linked (GlcNAc...) asparagine) is linked at asparagine 156. The LRRCT domain maps to 201–254 (NPWVCDCRLYDLVHLLDGWVSSNLIFIEARLRCASPRSLAGVAFSQLELRKCQS). One can recognise an Ig-like C2-type domain in the interval 267–336 (PLGSTVLLRC…YICQAKNFLG (70 aa)). Cysteine 276 and cysteine 329 are joined by a disulfide. N-linked (GlcNAc...) asparagine glycans are attached at residues asparagine 297 and asparagine 456. The 89-residue stretch at 431–519 (MVRSLKVVGD…QCVIFSTDEV (89 aa)) folds into the Fibronectin type-III domain. An LRR 6 repeat occupies 526-549 (QRLINMVVISVAAIIALPPTLLVC). Residues 528–548 (LINMVVISVAAIIALPPTLLV) form a helical membrane-spanning segment. Topologically, residues 549–624 (CCGALRRRCH…GGRRINEYFC (76 aa)) are cytoplasmic.

May form a homodimer. Interacts with LRIT2; may form a heterodimer with LRIT2. Interacts (via its N-terminal extracellular domain) with metabotropic glutamate receptor GRM6. Interacts (via its extreme C-terminus) with the scaffold protein FRMPD2 (via the third PDZ domain); the interaction leads to their colocalization in photoreceptor synapses. As to expression, expressed predominantly in developing photoreceptor and bipolar cells.

It localises to the endoplasmic reticulum membrane. Its subcellular location is the cell projection. The protein localises to the dendrite. Its function is as follows. Photoreceptor synaptic protein essential for normal vision. Involved in synapse formation in cone photoreceptor cells. In Mus musculus (Mouse), this protein is Leucine-rich repeat, immunoglobulin-like domain and transmembrane domain-containing protein 1 (Lrit1).